A 543-amino-acid polypeptide reads, in one-letter code: Chaperonin GroEL 1 (543 aa).

Residues 29 to 32 (TLGP), 86 to 90 (DGTTT), glycine 413, 479 to 481 (NAA), and aspartate 495 contribute to the ATP site. The segment at 524–543 (PEPKDAAPAGVGGGGGDFDY) is disordered. Over residues 533–543 (GVGGGGGDFDY) the composition is skewed to gly residues.

The protein belongs to the chaperonin (HSP60) family. In terms of assembly, forms a cylinder of 14 subunits composed of two heptameric rings stacked back-to-back. Interacts with the co-chaperonin GroES.

The protein resides in the cytoplasm. The enzyme catalyses ATP + H2O + a folded polypeptide = ADP + phosphate + an unfolded polypeptide.. In terms of biological role, together with its co-chaperonin GroES, plays an essential role in assisting protein folding. The GroEL-GroES system forms a nano-cage that allows encapsulation of the non-native substrate proteins and provides a physical environment optimized to promote and accelerate protein folding. The protein is Chaperonin GroEL 1 of Anabaena sp. (strain L31).